Reading from the N-terminus, the 167-residue chain is Ribosome maturation factor RimM (167 aa).

The PRC barrel domain maps to 94-165; that stretch reads ENEYYYSDII…KIIITPMEGL (72 aa).

It belongs to the RimM family. In terms of assembly, binds ribosomal protein uS19.

It localises to the cytoplasm. Functionally, an accessory protein needed during the final step in the assembly of 30S ribosomal subunit, possibly for assembly of the head region. Essential for efficient processing of 16S rRNA. May be needed both before and after RbfA during the maturation of 16S rRNA. It has affinity for free ribosomal 30S subunits but not for 70S ribosomes. This Staphylococcus aureus (strain bovine RF122 / ET3-1) protein is Ribosome maturation factor RimM.